The chain runs to 214 residues: Thymidylate kinase (214 aa).

An ATP-binding site is contributed by 10 to 17 (GPDGAGKT).

This sequence belongs to the thymidylate kinase family.

The catalysed reaction is dTMP + ATP = dTDP + ADP. Phosphorylation of dTMP to form dTDP in both de novo and salvage pathways of dTTP synthesis. The chain is Thymidylate kinase from Latilactobacillus sakei subsp. sakei (strain 23K) (Lactobacillus sakei subsp. sakei).